A 201-amino-acid polypeptide reads, in one-letter code: Small ribosomal subunit protein uS4c (201 aa).

The segment at 15-43 (LGALPGLTSKRPRPGSDLRNQSRSGKRSQ) is disordered. In terms of domain architecture, S4 RNA-binding spans 89–150 (MRLDNILFRL…EQRSRALIQN (62 aa)).

It belongs to the universal ribosomal protein uS4 family. As to quaternary structure, part of the 30S ribosomal subunit. Contacts protein S5. The interaction surface between S4 and S5 is involved in control of translational fidelity.

Its subcellular location is the plastid. The protein localises to the chloroplast. In terms of biological role, one of the primary rRNA binding proteins, it binds directly to 16S rRNA where it nucleates assembly of the body of the 30S subunit. Functionally, with S5 and S12 plays an important role in translational accuracy. The protein is Small ribosomal subunit protein uS4c (rps4) of Liriodendron tulipifera (Tuliptree).